Reading from the N-terminus, the 314-residue chain is MKHLLSIADLTRESAVELLDEAERFEQALLGREVRKLPTLRGRTVMTVFFENSTRTRVSFEVAGKWMSADVINVSASSSSVSKGESLRDTAMTLRAAGADALIVRHPASGAAHQIASWTGRQDDGGPAVINAGDGTHEHPTQALLDALTLRQRLGDIEGKRIAIVGDILHSRVARSNALLLSMLGAEVVLVAPPTLLPVGVSSWPVSVAHSLDAELPGLDAVLMLRVQAERMNGGFFPSQREYSINYGLSEKRLALLPEHAVVLHPGPMLRGMEIASAVADSTRTAVLQQVTNGVHMRMAVLFRLLVGAEDVAG.

Residues Arg-55 and Thr-56 each contribute to the carbamoyl phosphate site. Lys-83 contacts L-aspartate. Carbamoyl phosphate-binding residues include Arg-105, His-139, and Gln-142. L-aspartate contacts are provided by Arg-172 and Arg-226. The carbamoyl phosphate site is built by Gly-267 and Pro-268.

The protein belongs to the aspartate/ornithine carbamoyltransferase superfamily. ATCase family. In terms of assembly, heterododecamer (2C3:3R2) of six catalytic PyrB chains organized as two trimers (C3), and six regulatory PyrI chains organized as three dimers (R2).

The catalysed reaction is carbamoyl phosphate + L-aspartate = N-carbamoyl-L-aspartate + phosphate + H(+). It functions in the pathway pyrimidine metabolism; UMP biosynthesis via de novo pathway; (S)-dihydroorotate from bicarbonate: step 2/3. Catalyzes the condensation of carbamoyl phosphate and aspartate to form carbamoyl aspartate and inorganic phosphate, the committed step in the de novo pyrimidine nucleotide biosynthesis pathway. This Rhodococcus opacus (strain B4) protein is Aspartate carbamoyltransferase catalytic subunit.